A 277-amino-acid chain; its full sequence is Putative hydroxypyruvate isomerase (277 aa).

Catalysis depends on proton donor/acceptor residues E150 and E249.

It belongs to the hyi family.

The catalysed reaction is 3-hydroxypyruvate = 2-hydroxy-3-oxopropanoate. In terms of biological role, catalyzes the reversible isomerization between hydroxypyruvate and 2-hydroxy-3-oxopropanoate (also termed tartronate semialdehyde). The polypeptide is Putative hydroxypyruvate isomerase (Hyi) (Mus musculus (Mouse)).